A 352-amino-acid chain; its full sequence is Phosphatidylglycerol--prolipoprotein diacylglyceryl transferase (352 aa).

Transmembrane regions (helical) follow at residues 20–40 (WYGLSYMMGFICAYILITWLA), 55–75 (FITYAAIGTLVGGRLGYVLFY), 97–117 (EGGMASHGGIIGIVIACLLYA), and 122–142 (VNSLYLLDLVAVTGPIGVFFG). Residue Arg-143 participates in a 1,2-diacyl-sn-glycero-3-phospho-(1'-sn-glycerol) binding. 3 consecutive transmembrane segments (helical) span residues 248-268 (SQLFAAFGEGLLIFMFLFFLW), 275-295 (GFIAACFVLIYAVVRVVDEHF), and 314-334 (WLSLAMFVVGLILMVVWTRAA).

This sequence belongs to the Lgt family.

It localises to the cell inner membrane. It carries out the reaction L-cysteinyl-[prolipoprotein] + a 1,2-diacyl-sn-glycero-3-phospho-(1'-sn-glycerol) = an S-1,2-diacyl-sn-glyceryl-L-cysteinyl-[prolipoprotein] + sn-glycerol 1-phosphate + H(+). The protein operates within protein modification; lipoprotein biosynthesis (diacylglyceryl transfer). In terms of biological role, catalyzes the transfer of the diacylglyceryl group from phosphatidylglycerol to the sulfhydryl group of the N-terminal cysteine of a prolipoprotein, the first step in the formation of mature lipoproteins. This Bdellovibrio bacteriovorus (strain ATCC 15356 / DSM 50701 / NCIMB 9529 / HD100) protein is Phosphatidylglycerol--prolipoprotein diacylglyceryl transferase.